A 79-amino-acid polypeptide reads, in one-letter code: MAFLKKSLFLVLFLGIVSLSICEEEKREGEEEEKQEEENEELSEEELRERRALLDKLKSLGKVVGKVAIGVAQHYLNPQ.

The signal sequence occupies residues 1-22 (MAFLKKSLFLVLFLGIVSLSIC). Residues 23–49 (EEEKREGEEEEKQEEENEELSEEELRE) constitute a propeptide that is removed on maturation. The disordered stretch occupies residues 27-46 (REGEEEEKQEEENEELSEEE). Acidic residues predominate over residues 30 to 44 (EEEEKQEEENEELSE).

The protein belongs to the frog skin active peptide (FSAP) family. Dermaseptin subfamily. In terms of tissue distribution, expressed by the skin glands.

The protein localises to the secreted. Has antibacterial activity. This Boana raniceps (Chaco tree frog) protein is Raniseptin-9.